The following is an 89-amino-acid chain: UPF0175 protein ssl1255 (89 aa).

This sequence belongs to the UPF0175 family.

This chain is UPF0175 protein ssl1255, found in Synechocystis sp. (strain ATCC 27184 / PCC 6803 / Kazusa).